A 198-amino-acid chain; its full sequence is MKSRGLVRFFFSILAVGALITSIVGFALKWGEYRGLFLTFEAGQIFSVLFWFIGVGMIFSVISQMGFFVFLTVHRFALEILRSSSLWNLLQLFFILFVAFDLMYVRFLFFGESGESLAGYAWLPVFLLIFGVITAYIKQKQSSKKTFVSSLFLMVVITALEWFPALRVNDEDWLYLMLFPLMACNAFQLLMLPKFAAK.

The next 6 helical transmembrane spans lie at 9–29 (FFFS…FALK), 42–62 (AGQI…FSVI), 90–110 (LQLF…FLFF), 117–137 (LAGY…TAYI), 146–166 (TFVS…FPAL), and 173–193 (WLYL…LMLP).

Its subcellular location is the cell membrane. Its function is as follows. Involved in the activation of the KinB signaling pathway of sporulation. This Bacillus subtilis (strain 168) protein is KinB-signaling pathway activation protein (kbaA).